The primary structure comprises 167 residues: MAVNDCFSLTYPHNPHPGDLIEVFRPCYQHWALYLGDGYVINIAPVDGIPSSFSSAKSVFSTKALVKMQLLKDVVGNDTYRINNKYDTTYPPLPVEEVIQRSEFAIGQEVTYDLLVNNCEHFVTLLRYGEGVSEQANRAIGTIGLVAAGIDIFTFLGLFPKRQGAKS.

At 1 to 138 the chain is on the cytoplasmic side; the sequence is MAVNDCFSLT…GEGVSEQANR (138 aa). In terms of domain architecture, LRAT spans 20–135; it reads LIEVFRPCYQ…LRYGEGVSEQ (116 aa). His-30 is a catalytic residue. The Acyl-thioester intermediate role is filled by Cys-119. A helical membrane pass occupies residues 139–159; sequence AIGTIGLVAAGIDIFTFLGLF. The Lumenal portion of the chain corresponds to 160–167; the sequence is PKRQGAKS.

It belongs to the H-rev107 family.

Its subcellular location is the membrane. It is found in the cytoplasm. The protein resides in the nucleus. It catalyses the reaction a 1,2-diacyl-sn-glycero-3-phosphocholine + H2O = a 1-acyl-sn-glycero-3-phosphocholine + a fatty acid + H(+). The catalysed reaction is a 1,2-diacyl-sn-glycero-3-phosphocholine + H2O = a 2-acyl-sn-glycero-3-phosphocholine + a fatty acid + H(+). It carries out the reaction 1,2-dihexadecanoyl-sn-glycero-3-phosphocholine + H2O = 2-hexadecanoyl-sn-glycero-3-phosphocholine + hexadecanoate + H(+). The enzyme catalyses 1,2-dihexadecanoyl-sn-glycero-3-phosphocholine + H2O = 1-hexadecanoyl-sn-glycero-3-phosphocholine + hexadecanoate + H(+). It catalyses the reaction 1-hexadecanoyl-2-(5Z,8Z,11Z,14Z-eicosatetraenoyl)-sn-glycero-3-phosphoethanolamine + H2O = 2-(5Z,8Z,11Z,14Z)-eicosatetraenoyl-sn-glycero-3-phosphoethanolamine + hexadecanoate + H(+). The catalysed reaction is 1-hexadecanoyl-2-(5Z,8Z,11Z,14Z-eicosatetraenoyl)-sn-glycero-3-phosphoethanolamine + H2O = 1-hexadecanoyl-sn-glycero-3-phosphoethanolamine + (5Z,8Z,11Z,14Z)-eicosatetraenoate + H(+). It carries out the reaction 1,2-di-(9Z-octadecenoyl)-sn-glycero-3-phosphoethanolamine + 1,2-dihexadecanoyl-sn-glycero-3-phosphocholine = hexadecanoyl-sn-glycero-3-phosphocholine + N-hexadecanoyl-1,2-di-(9Z-octadecenoyl)-sn-glycero-3-phosphoethanolamine + H(+). The enzyme catalyses 1,2-dihexadecanoyl-sn-glycero-3-phosphocholine + a 2-acyl-sn-glycero-3-phosphocholine = a 1-hexadecanoyl-2-acyl-sn-glycero-3-phosphocholine + 2-hexadecanoyl-sn-glycero-3-phosphocholine. Exhibits both phospholipase A1/2 and acyltransferase activities. Shows phospholipase A1 (PLA1) and A2 (PLA2) activity, catalyzing the calcium-independent release of fatty acids from the sn-1 or sn-2 position of glycerophospholipids. Shows O-acyltransferase activity, catalyzing the transfer of a fatty acyl group from glycerophospholipid to the hydroxyl group of lysophospholipid. The protein is Phospholipase A and acyltransferase 1 of Rattus norvegicus (Rat).